Consider the following 343-residue polypeptide: Polyprenal reductase 2 (343 aa).

6 consecutive transmembrane segments (helical) span residues 12–32 (GAWI…SIPT), 66–86 (FAHF…ATWM), 164–184 (MHIL…LSLC), 223–243 (PLMK…WGWI), 266–286 (IIPY…AEIV), and 291–311 (LLIA…FVAA).

Belongs to the steroid 5-alpha reductase family. Polyprenal reductase subfamily. Expressed in roots, leaves, stems and flowers.

Its subcellular location is the endoplasmic reticulum membrane. The enzyme catalyses a di-trans,poly-cis-dolichal + NADP(+) = a di-trans,poly-cis-polyprenal + NADPH + H(+). Its pathway is protein modification; protein glycosylation. Plays a key role in early steps of protein N-linked glycosylation by being involved in the conversion of polyprenol into dolichol. Acts as a polyprenal reductase that mediates the reduction of polyprenal into dolichal in a NADP-dependent mechanism. Dolichols are required for the synthesis of dolichol-linked monosaccharides and the oligosaccharide precursor used for N-glycosylation. Involved in the regulation of plant growth and reproductive processes. This chain is Polyprenal reductase 2, found in Arabidopsis thaliana (Mouse-ear cress).